The sequence spans 150 residues: 3-dehydroquinate dehydratase (150 aa).

The active-site Proton acceptor is the tyrosine 26. Substrate contacts are provided by asparagine 77, histidine 83, and aspartate 90. The Proton donor role is filled by histidine 103. Substrate-binding positions include 104–105 (LS) and arginine 114.

This sequence belongs to the type-II 3-dehydroquinase family. In terms of assembly, homododecamer.

It catalyses the reaction 3-dehydroquinate = 3-dehydroshikimate + H2O. It participates in metabolic intermediate biosynthesis; chorismate biosynthesis; chorismate from D-erythrose 4-phosphate and phosphoenolpyruvate: step 3/7. In terms of biological role, catalyzes a trans-dehydration via an enolate intermediate. The protein is 3-dehydroquinate dehydratase of Photorhabdus laumondii subsp. laumondii (strain DSM 15139 / CIP 105565 / TT01) (Photorhabdus luminescens subsp. laumondii).